Here is a 62-residue protein sequence, read N- to C-terminus: MNFTKILFFVVACVFAMRTVSAAPWNPFKELEKVGQRVRDAVISAGPAVATVAQATALAKGK.

Positions 1–22 (MNFTKILFFVVACVFAMRTVSA) are cleaved as a signal peptide. The propeptide at 23–24 (AP) is removed by a dipeptidylpeptidase. Lys60 is subject to Lysine amide.

The protein belongs to the cecropin family.

The protein resides in the secreted. Cecropins have lytic and antibacterial activity against several Gram-positive and Gram-negative bacteria. The chain is Cecropin-D from Hyalophora cecropia (Cecropia moth).